Here is a 476-residue protein sequence, read N- to C-terminus: Protein transport protein Sec61 subunit alpha (476 aa).

Residues Gly2–Leu33 lie on the Cytoplasmic side of the membrane. A helical transmembrane segment spans residues Trp34–Ile53. At Met54–Leu76 the chain is on the lumenal side. A helical membrane pass occupies residues Met77–Gly96. Topologically, residues Ala97–Lys117 are cytoplasmic. The chain crosses the membrane as a helical span at residues Leu118–Gly138. The Lumenal portion of the chain corresponds to Asp139–Gly144. A helical membrane pass occupies residues Ala145 to Leu165. The Cytoplasmic segment spans residues Asp166–Gly172. Residues Tyr173–Trp193 form a helical membrane-spanning segment. Residues Lys194–Pro240 lie on the Lumenal side of the membrane. The helical transmembrane segment at Asn241–Phe261 threads the bilayer. The Cytoplasmic segment spans residues Arg262–Asn288. The helical transmembrane segment at Ile289 to Ser309 threads the bilayer. Residues Thr310 to Val354 are Lumenal-facing. The chain crosses the membrane as a helical span at residues Leu355–Phe375. Over Ser376–Ala420 the chain is Cytoplasmic. Residues Ala421 to Ile441 form a helical membrane-spanning segment. Residues Gly442 to Thr445 lie on the Lumenal side of the membrane. A helical membrane pass occupies residues Gly446–Val462. The Cytoplasmic portion of the chain corresponds to Lys463–Phe476.

The protein belongs to the SecY/SEC61-alpha family. The SEC61 channel-forming translocon complex consists of channel-forming core components SEC61A1, SEC61B and SEC61G and different auxiliary components such as SEC62 and SEC63. The SEC61 channel associates with the multi-pass translocon (MPT) complex.

Its subcellular location is the endoplasmic reticulum membrane. Its function is as follows. Component of SEC61 channel-forming translocon complex that mediates transport of signal peptide-containing precursor polypeptides across the endoplasmic reticulum (ER). Forms a ribosome receptor and a gated pore in the ER membrane, both functions required for cotranslational translocation of nascent polypeptides. May cooperate with auxiliary protein SEC62, SEC63 and HSPA5/BiP to enable post-translational transport of small presecretory proteins. The SEC61 channel is also involved in ER membrane insertion of transmembrane proteins: it mediates membrane insertion of the first few transmembrane segments of proteins, while insertion of subsequent transmembrane regions of multi-pass membrane proteins is mediated by the multi-pass translocon (MPT) complex. The chain is Protein transport protein Sec61 subunit alpha (sec61a) from Dissostichus mawsoni (Antarctic cod).